Reading from the N-terminus, the 342-residue chain is Biotin synthase (342 aa).

The Radical SAM core domain maps to 63 to 288 (PEVEVEGIIS…RTMLRFAGGR (226 aa)). The [4Fe-4S] cluster site is built by C78, C82, and C85. Residues C121, C154, C213, and R283 each contribute to the [2Fe-2S] cluster site.

Belongs to the radical SAM superfamily. Biotin synthase family. As to quaternary structure, homodimer. Requires [4Fe-4S] cluster as cofactor. It depends on [2Fe-2S] cluster as a cofactor.

It catalyses the reaction (4R,5S)-dethiobiotin + (sulfur carrier)-SH + 2 reduced [2Fe-2S]-[ferredoxin] + 2 S-adenosyl-L-methionine = (sulfur carrier)-H + biotin + 2 5'-deoxyadenosine + 2 L-methionine + 2 oxidized [2Fe-2S]-[ferredoxin]. It functions in the pathway cofactor biosynthesis; biotin biosynthesis; biotin from 7,8-diaminononanoate: step 2/2. Functionally, catalyzes the conversion of dethiobiotin (DTB) to biotin by the insertion of a sulfur atom into dethiobiotin via a radical-based mechanism. In Mycobacteroides abscessus (strain ATCC 19977 / DSM 44196 / CCUG 20993 / CIP 104536 / JCM 13569 / NCTC 13031 / TMC 1543 / L948) (Mycobacterium abscessus), this protein is Biotin synthase.